The primary structure comprises 334 residues: N-chimaerin (334 aa).

Positions 1-10 (MPSKESWSGR) are enriched in polar residues. The interval 1 to 22 (MPSKESWSGRKTNRATVHKSKQ) is disordered. Phosphothreonine is present on Thr-67. Residues 80–130 (VHNFKVHTFRGPHWCEYCANFMWGLIAQGVKCADCGLNVHKQCSKMVPNDC) form a Phorbol-ester/DAG-type zinc finger. The Rho-GAP domain occupies 143-334 (CDLTTLVKAH…LLIKNEDILF (192 aa)). Thr-215 is modified (phosphothreonine).

Interacts with EPHA4; effector of EPHA4 in axon guidance linking EPHA4 activation to RAC1 regulation. Phosphorylated. Phosphorylation is EPHA4 kinase activity-dependent. As to expression, in neurons in brain regions that are involved in learning and memory processes.

Functionally, GTPase-activating protein for p21-rac and a phorbol ester receptor. Involved in the assembly of neuronal locomotor circuits as a direct effector of EPHA4 in axon guidance. This is N-chimaerin (Chn1) from Rattus norvegicus (Rat).